A 176-amino-acid chain; its full sequence is NAD(P)H-quinone oxidoreductase subunit J (176 aa).

Belongs to the complex I 30 kDa subunit family. NDH-1 can be composed of about 15 different subunits; different subcomplexes with different compositions have been identified which probably have different functions.

The protein resides in the cellular thylakoid membrane. It carries out the reaction a plastoquinone + NADH + (n+1) H(+)(in) = a plastoquinol + NAD(+) + n H(+)(out). The enzyme catalyses a plastoquinone + NADPH + (n+1) H(+)(in) = a plastoquinol + NADP(+) + n H(+)(out). In terms of biological role, NDH-1 shuttles electrons from an unknown electron donor, via FMN and iron-sulfur (Fe-S) centers, to quinones in the respiratory and/or the photosynthetic chain. The immediate electron acceptor for the enzyme in this species is believed to be plastoquinone. Couples the redox reaction to proton translocation, and thus conserves the redox energy in a proton gradient. Cyanobacterial NDH-1 also plays a role in inorganic carbon-concentration. The sequence is that of NAD(P)H-quinone oxidoreductase subunit J from Nostoc punctiforme (strain ATCC 29133 / PCC 73102).